The sequence spans 170 residues: Probable deoxyuridine 5'-triphosphate nucleotidohydrolase (170 aa).

Belongs to the dCTP deaminase family. Archaeal dUTPase subfamily.

It carries out the reaction dUTP + H2O = dUMP + diphosphate + H(+). Its pathway is pyrimidine metabolism; dUMP biosynthesis; dUMP from dCTP (dUTP route): step 2/2. Functionally, this enzyme is involved in nucleotide metabolism: it produces dUMP, the immediate precursor of thymidine nucleotides and it decreases the intracellular concentration of dUTP so that uracil cannot be incorporated into DNA. This chain is Probable deoxyuridine 5'-triphosphate nucleotidohydrolase, found in Methanococcoides burtonii (strain DSM 6242 / NBRC 107633 / OCM 468 / ACE-M).